Here is a 123-residue protein sequence, read N- to C-terminus: Small ribosomal subunit protein uS12 (123 aa).

Asp-89 carries the 3-methylthioaspartic acid modification.

The protein belongs to the universal ribosomal protein uS12 family. As to quaternary structure, part of the 30S ribosomal subunit. Contacts proteins S8 and S17. May interact with IF1 in the 30S initiation complex.

In terms of biological role, with S4 and S5 plays an important role in translational accuracy. Interacts with and stabilizes bases of the 16S rRNA that are involved in tRNA selection in the A site and with the mRNA backbone. Located at the interface of the 30S and 50S subunits, it traverses the body of the 30S subunit contacting proteins on the other side and probably holding the rRNA structure together. The combined cluster of proteins S8, S12 and S17 appears to hold together the shoulder and platform of the 30S subunit. In Rhodopseudomonas palustris (strain BisB18), this protein is Small ribosomal subunit protein uS12.